The primary structure comprises 118 residues: Small ribosomal subunit protein uS13 (118 aa).

A disordered region spans residues 94-118 (SLPLRGQRTKTNARTRKGPRKPIKK).

Belongs to the universal ribosomal protein uS13 family. In terms of assembly, part of the 30S ribosomal subunit. Forms a loose heterodimer with protein S19. Forms two bridges to the 50S subunit in the 70S ribosome.

In terms of biological role, located at the top of the head of the 30S subunit, it contacts several helices of the 16S rRNA. In the 70S ribosome it contacts the 23S rRNA (bridge B1a) and protein L5 of the 50S subunit (bridge B1b), connecting the 2 subunits; these bridges are implicated in subunit movement. Contacts the tRNAs in the A and P-sites. This is Small ribosomal subunit protein uS13 from Shewanella amazonensis (strain ATCC BAA-1098 / SB2B).